The primary structure comprises 229 residues: uncharacterized protein (229 aa).

A disordered region spans residues 61–229 (MQAEDKVSKP…TESEDKPKRG (169 aa)). The segment covering 109–128 (QQEKQQPEKAVVEQQEKQQP) has biased composition (basic and acidic residues). Over residues 166 to 194 (QPEQPERQQQAQPERQQQAQPERQQQAQP) the composition is skewed to low complexity. The segment covering 195–204 (EEAEDAEQEP) has biased composition (acidic residues). Basic and acidic residues predominate over residues 218-229 (TQTESEDKPKRG).

This is an uncharacterized protein from Frog virus 3 (isolate Goorha) (FV-3).